We begin with the raw amino-acid sequence, 286 residues long: Small ribosomal subunit protein uS2 (286 aa).

Residues 213 to 286 (EEQAQNNKWA…GAQEGGEWGS (74 aa)) form a disordered region. The segment covering 227 to 241 (SPALSAAVPSSAAPV) has biased composition (low complexity). Polar residues predominate over residues 244–270 (WSSSPSKETTEWGASNTAAAAKSSWSN). Positions 274–286 (GEWGAQEGGEWGS) are enriched in gly residues.

This sequence belongs to the universal ribosomal protein uS2 family. In terms of assembly, component of the small ribosomal subunit. Mature ribosomes consist of a small (40S) and a large (60S) subunit. The 40S subunit contains about 33 different proteins and 1 molecule of RNA (18S). The 60S subunit contains about 49 different proteins and 3 molecules of RNA (28S, 5.8S and 5S). Interacts with ribosomal protein S21.

It is found in the cytoplasm. Its function is as follows. Required for the assembly and/or stability of the 40S ribosomal subunit. Required for the processing of the 20S rRNA-precursor to mature 18S rRNA in a late step of the maturation of 40S ribosomal subunits. This Trichoplax adhaerens (Trichoplax reptans) protein is Small ribosomal subunit protein uS2.